The primary structure comprises 181 residues: Large ribosomal subunit protein uL10 (181 aa).

Belongs to the universal ribosomal protein uL10 family. In terms of assembly, part of the ribosomal stalk of the 50S ribosomal subunit. The N-terminus interacts with L11 and the large rRNA to form the base of the stalk. The C-terminus forms an elongated spine to which L12 dimers bind in a sequential fashion forming a multimeric L10(L12)X complex.

In terms of biological role, forms part of the ribosomal stalk, playing a central role in the interaction of the ribosome with GTP-bound translation factors. The polypeptide is Large ribosomal subunit protein uL10 (Chloroflexus aggregans (strain MD-66 / DSM 9485)).